A 205-amino-acid polypeptide reads, in one-letter code: Protein N-terminal glutamine amidohydrolase (205 aa).

Active-site residues include cysteine 20, histidine 74, and aspartate 90.

It belongs to the NTAQ1 family. As to quaternary structure, monomer.

It carries out the reaction N-terminal L-glutaminyl-[protein] + H2O = N-terminal L-glutamyl-[protein] + NH4(+). In terms of biological role, mediates the side-chain deamidation of N-terminal glutamine residues to glutamate, an important step in N-end rule pathway of protein degradation. Conversion of the resulting N-terminal glutamine to glutamate renders the protein susceptible to arginylation, polyubiquitination and degradation as specified by the N-end rule. Does not act on substrates with internal or C-terminal glutamine and does not act on non-glutamine residues in any position. The chain is Protein N-terminal glutamine amidohydrolase (tun) from Drosophila mojavensis (Fruit fly).